Consider the following 114-residue polypeptide: Non-specific lipid-transfer protein 1 (114 aa).

An N-terminal signal peptide occupies residues 1 to 23 (MEMVSKIACFVLLCMVVVAPHAE). Intrachain disulfides connect cysteine 27–cysteine 73, cysteine 37–cysteine 50, cysteine 51–cysteine 96, and cysteine 71–cysteine 110.

The protein belongs to the plant LTP family.

In terms of biological role, plant non-specific lipid-transfer proteins transfer phospholipids as well as galactolipids across membranes. May play a role in wax or cutin deposition in the cell walls of expanding epidermal cells and certain secretory tissues. The protein is Non-specific lipid-transfer protein 1 (TSW12) of Solanum lycopersicum (Tomato).